Here is a 106-residue protein sequence, read N- to C-terminus: Large ribosomal subunit protein eL42 (106 aa).

Belongs to the eukaryotic ribosomal protein eL42 family.

The sequence is that of Large ribosomal subunit protein eL42 (RPL44) from Kluyveromyces marxianus (Yeast).